We begin with the raw amino-acid sequence, 669 residues long: DNA ligase (669 aa).

NAD(+) contacts are provided by residues 34–38, 83–84, and E117; these read DAEYD and SL. The active-site N6-AMP-lysine intermediate is the K119. NAD(+) is bound by residues R140, E177, K293, and K317. Zn(2+) contacts are provided by C411, C414, C429, and C434. The BRCT domain occupies 591–669; the sequence is RLGGRFTGKT…EDEFLKMLEG (79 aa).

Belongs to the NAD-dependent DNA ligase family. LigA subfamily. Mg(2+) is required as a cofactor. The cofactor is Mn(2+).

The catalysed reaction is NAD(+) + (deoxyribonucleotide)n-3'-hydroxyl + 5'-phospho-(deoxyribonucleotide)m = (deoxyribonucleotide)n+m + AMP + beta-nicotinamide D-nucleotide.. In terms of biological role, DNA ligase that catalyzes the formation of phosphodiester linkages between 5'-phosphoryl and 3'-hydroxyl groups in double-stranded DNA using NAD as a coenzyme and as the energy source for the reaction. It is essential for DNA replication and repair of damaged DNA. In Geotalea daltonii (strain DSM 22248 / JCM 15807 / FRC-32) (Geobacter daltonii), this protein is DNA ligase.